We begin with the raw amino-acid sequence, 269 residues long: Expansin-B9 (269 aa).

The N-terminal stretch at 1-24 (MGSLANNIMVVGAVLAALVVGGSC) is a signal peptide. An N-linked (GlcNAc...) asparagine glycan is attached at asparagine 34. An Expansin-like EG45 domain is found at 63 to 169 (GGACGIKNVN…RRVRCKYPAG (107 aa)). 3 disulfide bridges follow: cysteine 66–cysteine 94, cysteine 97–cysteine 164, and cysteine 102–cysteine 108. An Expansin-like CBD domain is found at 183 to 264 (NYVAVLVKFV…NWRPDAVYTS (82 aa)).

The protein belongs to the expansin family. Expansin B subfamily. Expressed in anthers and pollen.

The protein resides in the secreted. It localises to the cell wall. It is found in the membrane. May aid fertilization by loosening the cell wall of the stigma and style, thereby facilitating penetration of the pollen tube. Acts selectively on grass cell walls, which are relatively poor in pectins and xyloglucans and rich in glucuronoarabinoxylans and (1-3),(1-4)-beta-D-glucans, when compared with cell walls of other angiosperms, including other monocots. This is Expansin-B9 (EXPB9) from Zea mays (Maize).